The following is a 446-amino-acid chain: DNA repair protein RadA (446 aa).

The C4-type zinc finger occupies 10-27 (CQACGNQQSKWLGKCPDC). Residue 96 to 103 (GSPGVGKS) coordinates ATP. Residues 253 to 257 (KNRFG) carry the RadA KNRFG motif motif. Residues 349-446 (DVFVNISGGV…KELSQVLEWM (98 aa)) are lon-protease-like.

This sequence belongs to the RecA family. RadA subfamily.

In terms of biological role, DNA-dependent ATPase involved in processing of recombination intermediates, plays a role in repairing DNA breaks. Stimulates the branch migration of RecA-mediated strand transfer reactions, allowing the 3' invading strand to extend heteroduplex DNA faster. Binds ssDNA in the presence of ADP but not other nucleotides, has ATPase activity that is stimulated by ssDNA and various branched DNA structures, but inhibited by SSB. Does not have RecA's homology-searching function. This Campylobacter jejuni subsp. jejuni serotype O:2 (strain ATCC 700819 / NCTC 11168) protein is DNA repair protein RadA.